The sequence spans 125 residues: Calcitonin receptor-stimulating peptide 2 (125 aa).

An N-terminal signal peptide occupies residues 1 to 25 (MGFWKFLPFLVLSFLVVYQAGMFQA). A propeptide spanning residues 26–77 (APFRSALENDFDPAILTEKEMCLLLAAVMNDYVQMKTSELKQEAEHFHITAQ) is cleaved from the precursor. The cysteines at positions 81 and 86 are disulfide-linked.

Belongs to the calcitonin family.

The protein resides in the secreted. This chain is Calcitonin receptor-stimulating peptide 2 (CRSP2), found in Capra hircus (Goat).